We begin with the raw amino-acid sequence, 305 residues long: Protein FdhE homolog (305 aa).

It belongs to the FdhE family.

Its subcellular location is the cytoplasm. Functionally, necessary for formate dehydrogenase activity. This chain is Protein FdhE homolog, found in Actinobacillus pleuropneumoniae serotype 7 (strain AP76).